A 392-amino-acid chain; its full sequence is Formate-dependent phosphoribosylglycinamide formyltransferase (392 aa).

Residues 22–23 (EL) and Glu-82 contribute to the N(1)-(5-phospho-beta-D-ribosyl)glycinamide site. ATP-binding positions include Arg-114, Lys-155, 160 to 165 (SSGKGQ), 195 to 198 (EGVV), and Glu-203. Residues 119 to 308 (RLAAEELQLP…EFALHVRAFL (190 aa)) enclose the ATP-grasp domain. Residues Glu-267 and Glu-279 each coordinate Mg(2+). N(1)-(5-phospho-beta-D-ribosyl)glycinamide-binding positions include Asp-286, Lys-355, and 362 to 363 (RR).

This sequence belongs to the PurK/PurT family. In terms of assembly, homodimer.

The catalysed reaction is N(1)-(5-phospho-beta-D-ribosyl)glycinamide + formate + ATP = N(2)-formyl-N(1)-(5-phospho-beta-D-ribosyl)glycinamide + ADP + phosphate + H(+). The protein operates within purine metabolism; IMP biosynthesis via de novo pathway; N(2)-formyl-N(1)-(5-phospho-D-ribosyl)glycinamide from N(1)-(5-phospho-D-ribosyl)glycinamide (formate route): step 1/1. Its function is as follows. Involved in the de novo purine biosynthesis. Catalyzes the transfer of formate to 5-phospho-ribosyl-glycinamide (GAR), producing 5-phospho-ribosyl-N-formylglycinamide (FGAR). Formate is provided by PurU via hydrolysis of 10-formyl-tetrahydrofolate. This Klebsiella pneumoniae (strain 342) protein is Formate-dependent phosphoribosylglycinamide formyltransferase.